The sequence spans 610 residues: UvrABC system protein C (610 aa).

The 79-residue stretch at 16-94 folds into the GIY-YIG domain; sequence SQPGVYRMYD…IKLYQPRYNV (79 aa). Residues 204–239 form the UVR domain; it reads DQVLTQLIARMEKASQDLAFEEAARIRDQIQAVRRV.

The protein belongs to the UvrC family. In terms of assembly, interacts with UvrB in an incision complex.

Its subcellular location is the cytoplasm. In terms of biological role, the UvrABC repair system catalyzes the recognition and processing of DNA lesions. UvrC both incises the 5' and 3' sides of the lesion. The N-terminal half is responsible for the 3' incision and the C-terminal half is responsible for the 5' incision. In Salmonella schwarzengrund (strain CVM19633), this protein is UvrABC system protein C.